The chain runs to 81 residues: Sulfur carrier protein TusA (81 aa).

The active-site Cysteine persulfide intermediate is the Cys-19.

Belongs to the sulfur carrier protein TusA family.

It localises to the cytoplasm. Sulfur carrier protein which probably makes part of a sulfur-relay system. The polypeptide is Sulfur carrier protein TusA (Shewanella sediminis (strain HAW-EB3)).